We begin with the raw amino-acid sequence, 377 residues long: Homoserine O-acetyltransferase (377 aa).

The region spanning 48–347 (NVVLIEHALT…PVGHDAFLTE (300 aa)) is the AB hydrolase-1 domain. The active-site Nucleophile is S143. R213 contacts substrate. Active-site residues include D311 and H341. A substrate-binding site is contributed by D342.

Belongs to the AB hydrolase superfamily. MetX family. Homodimer.

It localises to the cytoplasm. The enzyme catalyses L-homoserine + acetyl-CoA = O-acetyl-L-homoserine + CoA. Its pathway is amino-acid biosynthesis; L-methionine biosynthesis via de novo pathway; O-acetyl-L-homoserine from L-homoserine: step 1/1. Its function is as follows. Transfers an acetyl group from acetyl-CoA to L-homoserine, forming acetyl-L-homoserine. This chain is Homoserine O-acetyltransferase, found in Corynebacterium glutamicum (strain ATCC 13032 / DSM 20300 / JCM 1318 / BCRC 11384 / CCUG 27702 / LMG 3730 / NBRC 12168 / NCIMB 10025 / NRRL B-2784 / 534).